A 78-amino-acid polypeptide reads, in one-letter code: D-alanyl carrier protein (78 aa).

A Carrier domain is found at 1–78; it reads MAFRENVLEI…MIITQLEALK (78 aa). S36 carries the O-(pantetheine 4'-phosphoryl)serine modification.

The protein belongs to the DltC family. 4'-phosphopantetheine is transferred from CoA to a specific serine of apo-DCP.

It localises to the cytoplasm. Its pathway is cell wall biogenesis; lipoteichoic acid biosynthesis. Functionally, carrier protein involved in the D-alanylation of lipoteichoic acid (LTA). The loading of thioester-linked D-alanine onto DltC is catalyzed by D-alanine--D-alanyl carrier protein ligase DltA. The DltC-carried D-alanyl group is further transferred to cell membrane phosphatidylglycerol (PG) by forming an ester bond, probably catalyzed by DltD. D-alanylation of LTA plays an important role in modulating the properties of the cell wall in Gram-positive bacteria, influencing the net charge of the cell wall. The sequence is that of D-alanyl carrier protein from Listeria welshimeri serovar 6b (strain ATCC 35897 / DSM 20650 / CCUG 15529 / CIP 8149 / NCTC 11857 / SLCC 5334 / V8).